Reading from the N-terminus, the 149-residue chain is Placenta growth factor (149 aa).

The N-terminal stretch at Met-1 to Val-18 is a signal peptide. An N-linked (GlcNAc...) asparagine glycan is attached at Asn-33. Cystine bridges form between Cys-52–Cys-94, Cys-83–Cys-128, and Cys-87–Cys-130. Asn-101 carries N-linked (GlcNAc...) asparagine glycosylation.

Belongs to the PDGF/VEGF growth factor family. As to quaternary structure, antiparallel homodimer; disulfide-linked. Also found as heterodimer with VEGFA/VEGF.

The protein localises to the secreted. In terms of biological role, growth factor active in angiogenesis and endothelial cell growth, stimulating their proliferation and migration. It binds to the receptor FLT1/VEGFR-1. Also promotes cell tumor growth. The protein is Placenta growth factor (PGF) of Bos taurus (Bovine).